The chain runs to 181 residues: Ribonuclease HII (181 aa).

An RNase H type-2 domain is found at 1 to 181 (MICGIDEVGR…SLHRKNFKLI (181 aa)). A divalent metal cation is bound by residues Asp-6, Glu-7, and Asp-98.

Belongs to the RNase HII family. It depends on Mn(2+) as a cofactor. Requires Mg(2+) as cofactor.

Its subcellular location is the cytoplasm. The enzyme catalyses Endonucleolytic cleavage to 5'-phosphomonoester.. In terms of biological role, endonuclease that specifically degrades the RNA of RNA-DNA hybrids. The chain is Ribonuclease HII from Borreliella burgdorferi (strain ZS7) (Borrelia burgdorferi).